The following is a 944-amino-acid chain: Probable UDP-N-acetylglucosamine--peptide N-acetylglucosaminyltransferase SPINDLY (944 aa).

TPR repeat units follow at residues 34-67 (GTDA…DGAN), 68-101 (VEAL…DPKN), 102-135 (ACAL…DPSY), 143-176 (AIVL…DSHY), 177-210 (APAY…RPLY), 211-244 (AEAY…SPNF), 252-285 (AIAL…NWHY), 286-319 (ADAM…NPRC), 320-353 (AEAC…KPNF), 355-387 (QSLN…NPTY), and 388-421 (AEAY…DPDS). The interval 422–944 (RNAGQNRLLA…RCEANGHSSR (523 aa)) is catalytic region. The disordered stretch occupies residues 873–944 (NATAEEDNQS…RCEANGHSSR (72 aa)). A compositionally biased stretch (polar residues) spans 897–911 (PQPQIMVNGVTSPEG).

Belongs to the glycosyltransferase 41 family. O-GlcNAc transferase subfamily. In terms of tissue distribution, expressed in all parts of plants, including immature leaf blade, leaf sheath, mature leaf blade, roots, germinating embryos and aleurone layers.

The protein resides in the nucleus. It carries out the reaction L-seryl-[protein] + UDP-N-acetyl-alpha-D-glucosamine = 3-O-(N-acetyl-beta-D-glucosaminyl)-L-seryl-[protein] + UDP + H(+). It catalyses the reaction L-threonyl-[protein] + UDP-N-acetyl-alpha-D-glucosamine = 3-O-(N-acetyl-beta-D-glucosaminyl)-L-threonyl-[protein] + UDP + H(+). It functions in the pathway protein modification; protein glycosylation. In terms of biological role, probable O-linked N-acetylglucosamine transferase (OGT) involved in various processes such as gibberellin (GA) signaling pathway. OGTs catalyze the addition of nucleotide-activated sugars directly onto the polypeptide through O-glycosidic linkage with the hydroxyl of serine or threonine. Probably acts by adding O-linked sugars to yet unknown proteins. This Hordeum vulgare (Barley) protein is Probable UDP-N-acetylglucosamine--peptide N-acetylglucosaminyltransferase SPINDLY (SPY).